The following is a 391-amino-acid chain: 3-ketoacyl-CoA thiolase (391 aa).

Cys-95 functions as the Acyl-thioester intermediate in the catalytic mechanism. Active-site proton acceptor residues include His-347 and Cys-377.

This sequence belongs to the thiolase-like superfamily. Thiolase family. As to quaternary structure, heterotetramer of two alpha chains (FadB) and two beta chains (FadA).

Its subcellular location is the cytoplasm. The catalysed reaction is an acyl-CoA + acetyl-CoA = a 3-oxoacyl-CoA + CoA. Its pathway is lipid metabolism; fatty acid beta-oxidation. Functionally, catalyzes the final step of fatty acid oxidation in which acetyl-CoA is released and the CoA ester of a fatty acid two carbons shorter is formed. The polypeptide is 3-ketoacyl-CoA thiolase (Pseudomonas syringae pv. tomato (strain ATCC BAA-871 / DC3000)).